A 132-amino-acid polypeptide reads, in one-letter code: Phosphomevalonate dehydratase small subunit (132 aa).

S61 (proton acceptor) is an active-site residue.

This sequence belongs to the AcnX type II small subunit family. As to quaternary structure, heterodimer composed of a large subunit (PMDh-L) and a small subunit (PMDh-S).

It catalyses the reaction (R)-5-phosphomevalonate = (2E)-3-methyl-5-phosphooxypent-2-enoate + H2O. It functions in the pathway isoprenoid biosynthesis; isopentenyl diphosphate biosynthesis via mevalonate pathway. Component of a hydro-lyase that catalyzes the dehydration of mevalonate 5-phosphate (MVA5P) to form trans-anhydromevalonate 5-phosphate (tAHMP). Involved in the archaeal mevalonate (MVA) pathway, which provides fundamental precursors for isoprenoid biosynthesis, such as isopentenyl diphosphate (IPP) and dimethylallyl diphosphate (DMAPP). In Archaeoglobus fulgidus (strain ATCC 49558 / DSM 4304 / JCM 9628 / NBRC 100126 / VC-16), this protein is Phosphomevalonate dehydratase small subunit.